We begin with the raw amino-acid sequence, 375 residues long: tRNA-specific 2-thiouridylase MnmA (375 aa).

ATP-binding positions include 13–20 (AMSGGVDS) and Met-39. Cys-111 functions as the Nucleophile in the catalytic mechanism. A disulfide bridge links Cys-111 with Cys-208. Gly-135 contacts ATP. The segment at 158 to 160 (KDQ) is interaction with tRNA. Catalysis depends on Cys-208, which acts as the Cysteine persulfide intermediate. Residues 313-314 (RY) are interaction with tRNA.

The protein belongs to the MnmA/TRMU family.

It localises to the cytoplasm. It catalyses the reaction S-sulfanyl-L-cysteinyl-[protein] + uridine(34) in tRNA + AH2 + ATP = 2-thiouridine(34) in tRNA + L-cysteinyl-[protein] + A + AMP + diphosphate + H(+). Its function is as follows. Catalyzes the 2-thiolation of uridine at the wobble position (U34) of tRNA, leading to the formation of s(2)U34. This is tRNA-specific 2-thiouridylase MnmA from Geotalea uraniireducens (strain Rf4) (Geobacter uraniireducens).